The sequence spans 414 residues: Ceramide synthase 5 (414 aa).

Residues 1–43 (MATAAAETLGLLWGWLWSESFWLPQNVSWADLEGPGDGYGYPR) lie on the Lumenal side of the membrane. N-linked (GlcNAc...) asparagine glycosylation occurs at N26. A helical transmembrane segment spans residues 44 to 64 (AQHVLSVFPLAVCIFSVRMLF). The segment at 75 to 136 (RVGIKDSPVN…RHRRNQDKPP (62 aa)) is homeobox-like. The TLC domain occupies 139 to 340 (TKFCESMWRF…IVQTASKALS (202 aa)). The next 4 membrane-spanning stretches (helical) occupy residues 148-168 (FTYY…MPWF), 187-207 (LYYY…SQFI), 214-234 (FLMM…SYVN), and 272-292 (LFVI…PLWI). A Last loop motif motif is present at residues 299–309 (ESWEIIGPYPS). The helical transmembrane segment at 312 to 332 (LFNALLLILQVLHAIWSYLIV) threads the bilayer. At 333-414 (QTASKALSRG…RASPHLHSCD (82 aa)) the chain is on the cytoplasmic side. Residues 347–373 (DDRSDVESSSEEEDETTHKNNLSGSSS) are disordered.

Interacts with PAQR4; the interaction regulates the stability and activity of CERS5 and is inhibited in presence of ceramides. In terms of processing, phosphorylated at the C-terminus by CK2. In terms of tissue distribution, ubiquitously expressed, with highest levels in testis and kidney. Expressed in pulmonary epithelia.

The protein localises to the endoplasmic reticulum membrane. The enzyme catalyses a sphingoid base + hexadecanoyl-CoA = an N-hexadecanoyl-sphingoid base + CoA + H(+). The catalysed reaction is sphinganine + hexadecanoyl-CoA = N-hexadecanoylsphinganine + CoA + H(+). It carries out the reaction hexadecasphinganine + hexadecanoyl-CoA = N-hexadecanoylhexadecasphinganine + CoA + H(+). It catalyses the reaction sphing-4-enine + hexadecanoyl-CoA = N-hexadecanoylsphing-4-enine + CoA + H(+). The enzyme catalyses 2-hydroxyhexadecanoyl-CoA + sphinganine = N-(2-hydroxyhexadecanoyl)-sphinganine + CoA + H(+). The catalysed reaction is sphinganine + tetradecanoyl-CoA = N-(tetradecanoyl)-sphinganine + CoA + H(+). It carries out the reaction sphinganine + octadecanoyl-CoA = N-(octadecanoyl)-sphinganine + CoA + H(+). It catalyses the reaction sphinganine + (9Z)-octadecenoyl-CoA = N-(9Z-octadecenoyl)-sphinganine + CoA + H(+). The enzyme catalyses a fatty acyl-CoA + sphing-4-enine = an N-acylsphing-4-enine + CoA + H(+). The catalysed reaction is tetracosenoyl-CoA + sphing-4-enine = N-(tetracosenoyl)-sphing-4-enine + CoA + H(+). It functions in the pathway lipid metabolism; sphingolipid metabolism. With respect to regulation, inhibited by fumonisin B1. Functionally, ceramide synthase that catalyzes the transfer of the acyl chain from acyl-CoA to a sphingoid base, with high selectivity toward palmitoyl-CoA (hexadecanoyl-CoA; C16:0-CoA). Can use other acyl donors, but with less efficiency. N-acylates sphinganine and sphingosine bases to form dihydroceramides and ceramides in de novo synthesis and salvage pathways, respectively. Plays a role in de novo ceramide synthesis and surfactant homeostasis in pulmonary epithelia. The protein is Ceramide synthase 5 of Mus musculus (Mouse).